The primary structure comprises 501 residues: L-ornithine N(5)-monooxygenase (501 aa).

Residues 1-16 show a composition bias toward low complexity; that stretch reads MNGTSTTGNGFTNGTN. Residues 1–40 are disordered; sequence MNGTSTTGNGFTNGTNYPVPKLELQPETTSTSPTRAQTHP. The segment covering 26-37 has biased composition (polar residues); that stretch reads PETTSTSPTRAQ. FAD is bound by residues 92 to 100 and glutamine 111; that span reads EKQSNFAWH. Lysine 116 is a substrate binding site. Valine 177 serves as a coordination point for FAD. 263–266 is a binding site for NADP(+); it reads SGQS. Residues 304-307 and asparagine 334 each bind substrate; that span reads NELF. Residue 334–336 participates in NADP(+) binding; it reads NYS. 476–478 is a binding site for FAD; that stretch reads SLL. Serine 479 serves as a coordination point for substrate.

The protein belongs to the lysine N(6)-hydroxylase/L-ornithine N(5)-oxygenase family. Homotetramer. The cofactor is FAD.

The enzyme catalyses L-ornithine + NADPH + O2 = N(5)-hydroxy-L-ornithine + NADP(+) + H2O. The catalysed reaction is L-ornithine + NADH + O2 = N(5)-hydroxy-L-ornithine + NAD(+) + H2O. The protein operates within siderophore biosynthesis. Its function is as follows. L-ornithine N(5)-monooxygenase; part of the siderophore biosynthetic pathway. Arthroderma benhamiae produces 2 types of extracellular siderophores, ferrichrome C and ferricrocin. The biosynthesis of these siderophores depends on the hydroxylation of ornithine to N(5)-hydroxyornithine, catalyzed by the monooxygenase sidA. The structure of ferricrocin differs from ferrichrome C only by a serine for alanine substitution and the assembly of both siderophores is suggested to be performed by the nonribosomal peptide synthase (NRPS) sidC. The sequence is that of L-ornithine N(5)-monooxygenase from Arthroderma benhamiae (strain ATCC MYA-4681 / CBS 112371) (Trichophyton mentagrophytes).